The chain runs to 277 residues: Large ribosomal subunit protein uL2 (277 aa).

2 disordered regions span residues 38–58 and 219–277; these read HRKGGRNNQGRLTVRHQGGGH and TVRG…RKNK.

Belongs to the universal ribosomal protein uL2 family. Part of the 50S ribosomal subunit. Forms a bridge to the 30S subunit in the 70S ribosome.

Its function is as follows. One of the primary rRNA binding proteins. Required for association of the 30S and 50S subunits to form the 70S ribosome, for tRNA binding and peptide bond formation. It has been suggested to have peptidyltransferase activity; this is somewhat controversial. Makes several contacts with the 16S rRNA in the 70S ribosome. The sequence is that of Large ribosomal subunit protein uL2 from Bacillus pumilus (strain SAFR-032).